Reading from the N-terminus, the 63-residue chain is Large ribosomal subunit protein uL29 (63 aa).

Belongs to the universal ribosomal protein uL29 family.

The protein is Large ribosomal subunit protein uL29 of Bordetella avium (strain 197N).